The chain runs to 131 residues: ATP synthase epsilon chain, chloroplastic (131 aa).

This sequence belongs to the ATPase epsilon chain family. F-type ATPases have 2 components, CF(1) - the catalytic core - and CF(0) - the membrane proton channel. CF(1) has five subunits: alpha(3), beta(3), gamma(1), delta(1), epsilon(1). CF(0) has three main subunits: a, b and c.

It is found in the plastid. Its subcellular location is the chloroplast thylakoid membrane. Produces ATP from ADP in the presence of a proton gradient across the membrane. This chain is ATP synthase epsilon chain, chloroplastic, found in Guillardia theta (Cryptophyte).